A 308-amino-acid polypeptide reads, in one-letter code: SAP30-binding protein (308 aa).

The segment at 15–101 (AEYSDPESDG…EAEKRDPQEL (87 aa)) is disordered. Ser-18, Ser-22, Ser-43, and Ser-52 each carry phosphoserine. Residues 57–78 (DEDGYEEEEDENSKQSEDDDSE) show a composition bias toward acidic residues. Over residues 79 to 99 (TEKPEADDPKDNTEAEKRDPQ) the composition is skewed to basic and acidic residues. Residue Lys-95 forms a Glycyl lysine isopeptide (Lys-Gly) (interchain with G-Cter in SUMO2) linkage. Ser-113 bears the Phosphoserine mark. Glycyl lysine isopeptide (Lys-Gly) (interchain with G-Cter in SUMO2) cross-links involve residues Lys-220, Lys-304, and Lys-305.

The protein belongs to the HCNGP family. Interacts with histone deacetylase complex subunit SAP30.

It is found in the nucleus. Functionally, plays a role in transcriptional repression by promoting histone deacetylase activity, leading to deacetylation of histone H3. May be involved in the regulation of beta-2-microglobulin genes. This chain is SAP30-binding protein (Sap30bp), found in Mus musculus (Mouse).